Consider the following 378-residue polypeptide: Mevalonate kinase (378 aa).

ATP-binding positions include lysine 10, serine 138, and 143 to 149 (GSGLGSS). Positions 149 and 193 each coordinate Mg(2+). Aspartate 204 (proton acceptor) is an active-site residue.

Belongs to the GHMP kinase family. Mevalonate kinase subfamily. Mg(2+) serves as cofactor.

It localises to the cytoplasm. The enzyme catalyses (R)-mevalonate + ATP = (R)-5-phosphomevalonate + ADP + H(+). It participates in isoprenoid biosynthesis; isopentenyl diphosphate biosynthesis via mevalonate pathway; isopentenyl diphosphate from (R)-mevalonate: step 1/3. With respect to regulation, its activity is inhibited in vitro by geranyl pyrophosphate (GPP) and farnesyl pyrophosphate (FPP) that bind competitively at the ATP-binding site on the enzyme. In terms of biological role, catalyzes the phosphorylation of mevalonate to mevalonate 5-phosphate, a key step in isoprenoid and cholesterol biosynthesis. The polypeptide is Mevalonate kinase (Arabidopsis thaliana (Mouse-ear cress)).